We begin with the raw amino-acid sequence, 150 residues long: Large ribosomal subunit protein bL9 (150 aa).

Belongs to the bacterial ribosomal protein bL9 family.

Its function is as follows. Binds to the 23S rRNA. The sequence is that of Large ribosomal subunit protein bL9 from Lactococcus lactis subsp. cremoris (strain MG1363).